A 178-amino-acid chain; its full sequence is Photosystem I assembly protein Ycf4 (178 aa).

2 consecutive transmembrane segments (helical) span residues 19–39 (ILVA…SLSS) and 61–81 (LVMG…WAVI).

It belongs to the Ycf4 family.

Its subcellular location is the cellular thylakoid membrane. Functionally, seems to be required for the assembly of the photosystem I complex. This Synechococcus sp. (strain WH7803) protein is Photosystem I assembly protein Ycf4.